Reading from the N-terminus, the 509-residue chain is Butyrophilin-like protein 1 (509 aa).

A signal peptide spans 1–27 (MMKGSPSVPPAGCLLPLLLLLFTGVSG). Ig-like V-type domains lie at 28 to 139 (EVSW…QEVS) and 151 to 237 (PLVH…KAIL). Over 28–250 (EVSWFSVKGP…PFFPKTCPWK (223 aa)) the chain is Extracellular. Cystine bridges form between C53-C127 and C167-C221. Residues 251–271 (VALVCSVLILLVLLGGISLGI) form a helical membrane-spanning segment. Residues 272–509 (WKEHQVKRRE…SMGLSATAQP (238 aa)) are Cytoplasmic-facing. Residues 316–509 (RKALYKEDWK…SMGLSATAQP (194 aa)) enclose the B30.2/SPRY domain. The disordered stretch occupies residues 349-372 (MPDQDKTDSRTEENRGEETVSSSQ). Residues 351–366 (DQDKTDSRTEENRGEE) show a composition bias toward basic and acidic residues.

The protein belongs to the immunoglobulin superfamily. BTN/MOG family.

The protein localises to the membrane. The chain is Butyrophilin-like protein 1 (Btnl1) from Mus musculus (Mouse).